The chain runs to 2376 residues: MAG2-interacting protein 2 (2376 aa).

As to quaternary structure, forms a complex with MAG2, ZW10/MIP1 and MIP3 on the endoplasmic reticulum.

It localises to the endoplasmic reticulum membrane. In terms of biological role, required for proper maturation of seed storage proteins. Forms a complex with MAG2, ZW10/MIP1 and MIP3 on the endoplasmic reticulum that may be responsible for efficient transport of seed storage proteins. This is MAG2-interacting protein 2 from Arabidopsis thaliana (Mouse-ear cress).